The sequence spans 73 residues: Pollen allergen Amb t 5 (73 aa).

Positions 1–20 (MKNIFMLTLFILIITSTIKA) are cleaved as a signal peptide. The propeptide occupies 21–33 (IGSTNEVDEIKQE). Cystine bridges form between cysteine 38–cysteine 68, cysteine 44–cysteine 59, cysteine 51–cysteine 61, and cysteine 52–cysteine 72.

As to quaternary structure, monomer.

The protein is Pollen allergen Amb t 5 of Ambrosia trifida (Giant ragweed).